A 310-amino-acid polypeptide reads, in one-letter code: Elongation factor Ts, mitochondrial (310 aa).

The transit peptide at 1-42 directs the protein to the mitochondrion; the sequence is MGFQVLRSVIQAPLAKRSFLCKSCPSGLRVLYNNILLSSRSY.

Belongs to the EF-Ts family.

The protein resides in the mitochondrion. Associates with the EF-Tu.GDP complex and induces the exchange of GDP to GTP. It remains bound to the aminoacyl-tRNA.EF-Tu.GTP complex up to the GTP hydrolysis stage on the ribosome. The protein is Elongation factor Ts, mitochondrial (tsf1) of Schizosaccharomyces japonicus (strain yFS275 / FY16936) (Fission yeast).